A 2096-amino-acid chain; its full sequence is Tudor domain-containing protein 6 (2096 aa).

In terms of domain architecture, Tudor 1 spans 65 to 120 (ASASPGELCLVQVGLLWHRCRVVSRQAQESRVFLLDEGRTITAGAGSLAPGRREFF). Residues 287–316 (YRGSTGTGDENSTSATWEEREESPDKPGSP) are disordered. Residues 288–302 (RGSTGTGDENSTSAT) are compositionally biased toward polar residues. A Phosphothreonine modification is found at T293. 6 consecutive Tudor domains span residues 310–369 (PDKP…YFRM), 536–593 (KPEP…FRQL), 816–875 (HQRN…FLKV), 1033–1088 (PLNP…AYDV), 1352–1411 (PLQR…NAIL), and 1567–1626 (CPYI…ELLS). Residues S1722 and S2062 each carry the phosphoserine modification. Residues 2026-2084 (AFTVGSKCVVWSSLRNTWSKCEILETAEEGTRVLNLSNGMEEIVNPENVWNGIPKLDKS) form the Tudor 8 domain.

In terms of assembly, found in a mRNP complex (i.e. messenger ribonucleoproteins which correspond to mRNA with bound proteins), at least composed of TDRD1, TDRD6, TDRD7 and DDX4. Found in a complex, at least composed of PIWIL1, PIWIL2, DDX4 and TDRD6. Interacts with Tex19.1 and probably Tex19.2. Interacts with PRMT5. Interacts with SNRPB (when methylated); to trigger spliceosome formation. Undergoes proteolytic cleavage near the C-terminal by an unknown protease during the transition from meiosis I to meiosis II in primary spermatocytes.

The protein resides in the cytoplasm. Functionally, tudor domain-containing protein involved in germ cell development, more specifically the formation of chromatoid body (during spermiogenesis), Balbiani body (during oogenesis), germ plasm (upon fertilization), and for proper miRNA expression and spliceosome maturation. Essential for RNA-dependent helicase UPF1 localization to chromatoid body, for UPF1-UPF2 and UPF1-DDX4 interactions which are required for mRNA degradation, using the extended 3' UTR-triggered nonsense-mediated mRNA decay (NMD) pathway. Involved in spliceosome maturation and mRNA splicing in prophase I spermatocytes through interaction with arginine N-methyltransferase PRMT5 and symmetrically arginine dimethylated SNRPB (small nuclear ribonucleoprotein-associated protein). This chain is Tudor domain-containing protein 6, found in Homo sapiens (Human).